The sequence spans 196 residues: Protein GrpE (196 aa).

The disordered stretch occupies residues 1 to 40 (MSSKEQKTPEGQAPEEIIMDQHEEVEAVEPNDSAEQVDPR).

It belongs to the GrpE family. As to quaternary structure, homodimer.

It localises to the cytoplasm. Its function is as follows. Participates actively in the response to hyperosmotic and heat shock by preventing the aggregation of stress-denatured proteins, in association with DnaK and GrpE. It is the nucleotide exchange factor for DnaK and may function as a thermosensor. Unfolded proteins bind initially to DnaJ; upon interaction with the DnaJ-bound protein, DnaK hydrolyzes its bound ATP, resulting in the formation of a stable complex. GrpE releases ADP from DnaK; ATP binding to DnaK triggers the release of the substrate protein, thus completing the reaction cycle. Several rounds of ATP-dependent interactions between DnaJ, DnaK and GrpE are required for fully efficient folding. The polypeptide is Protein GrpE (Salmonella gallinarum (strain 287/91 / NCTC 13346)).